We begin with the raw amino-acid sequence, 45 residues long: Large ribosomal subunit protein bL36 (45 aa).

Residues 1-20 (MKVSSSIKADPSKGDKLVRR) form a disordered region.

This sequence belongs to the bacterial ribosomal protein bL36 family.

The chain is Large ribosomal subunit protein bL36 from Chlamydia abortus (strain DSM 27085 / S26/3) (Chlamydophila abortus).